The chain runs to 504 residues: UDP-N-acetylglucosamine--peptide N-acetylglucosaminyltransferase GtfA subunit (504 aa).

16-19 is a UDP binding site; that stretch reads GVEY. His-243 is an N-acetyl-D-glucosamine binding site. Residue 385–386 participates in UDP binding; it reads HK. 405–408 is a binding site for N-acetyl-D-glucosamine; it reads EGFG.

The protein belongs to the glycosyltransferase group 1 family. Glycosyltransferase 4 subfamily. In terms of assembly, interacts with stabilizing protein GtfB (Gtf1), probably via the N-terminus of this protein; probably forms a heterotetramer with 2 subunits each of GtfA and GtfB. Part of the accessory SecA2/SecY2 protein translocation apparatus.

The protein localises to the cytoplasm. Its subcellular location is the cell membrane. It carries out the reaction L-seryl-[protein] + UDP-N-acetyl-alpha-D-glucosamine = 3-O-[N-acetyl-alpha-D-glucosaminyl]-L-seryl-[protein] + UDP + H(+). Its pathway is protein modification; protein glycosylation. Its function is as follows. Required for polymorphic O-glycosylation of serine-rich repeat protein Fap1. Catalyzes the first step in glycosylation by transferring N-acetylglucosamine from UDP-GlcNAc to serine residues in Fap1. Part of the accessory SecA2/SecY2 system specifically required to export Fap1, a serine-rich fimbrial adhesin encoded upstream in the same operon. The GtfA-GtfB (Gtf1-Gtf2 in this bacteria) complex adds GlcNAc from UDP-GlcNAc to Fap1, attaching the first sugar residue. Cannot use not UDP-Glc as substrate. This subunit has very low glycosyltransferase activity; the GtfB stabilizing protein enhances membrane association, protease resistance and glycosyltransferase activity. In Streptococcus parasanguinis, this protein is UDP-N-acetylglucosamine--peptide N-acetylglucosaminyltransferase GtfA subunit.